Here is a 246-residue protein sequence, read N- to C-terminus: DNA-directed RNA polymerase subunit alpha (246 aa).

It belongs to the RNA polymerase alpha chain family. In plastids the minimal PEP RNA polymerase catalytic core is composed of four subunits: alpha, beta, beta', and beta''. When a (nuclear-encoded) sigma factor is associated with the core the holoenzyme is formed, which can initiate transcription (Potential).

It localises to the plastid. The catalysed reaction is RNA(n) + a ribonucleoside 5'-triphosphate = RNA(n+1) + diphosphate. Functionally, DNA-dependent RNA polymerase catalyzes the transcription of DNA into RNA using the four ribonucleoside triphosphates as substrates. The chain is DNA-directed RNA polymerase subunit alpha (rpoA) from Helicosporidium sp. subsp. Simulium jonesii (Green alga).